We begin with the raw amino-acid sequence, 134 residues long: Endoribonuclease YbeY (134 aa).

Positions 94, 98, and 104 each coordinate Zn(2+).

Belongs to the endoribonuclease YbeY family. It depends on Zn(2+) as a cofactor.

It localises to the cytoplasm. In terms of biological role, single strand-specific metallo-endoribonuclease involved in late-stage 70S ribosome quality control and in maturation of the 3' terminus of the 16S rRNA. The chain is Endoribonuclease YbeY from Campylobacter fetus subsp. fetus (strain 82-40).